The chain runs to 453 residues: Bifunctional protein GlmU (453 aa).

A pyrophosphorylase region spans residues 1–225 (MNIVILAAGT…EWETLGVNSK (225 aa)). Residues 6-9 (LAAG), K20, Q71, 76-77 (GT), 98-100 (YGD), G135, E150, N165, and N223 contribute to the UDP-N-acetyl-alpha-D-glucosamine site. Position 100 (D100) interacts with Mg(2+). Residue N223 participates in Mg(2+) binding. The segment at 226–246 (QQLAELERIHQHNVADALLVA) is linker. The N-acetyltransferase stretch occupies residues 247–453 (GVTLADPARL…GYVRPTKKKS (207 aa)). 2 residues coordinate UDP-N-acetyl-alpha-D-glucosamine: R329 and K347. The active-site Proton acceptor is H359. Residues Y362 and N373 each contribute to the UDP-N-acetyl-alpha-D-glucosamine site. Acetyl-CoA-binding positions include A376, 382–383 (NY), S401, and A419.

In the N-terminal section; belongs to the N-acetylglucosamine-1-phosphate uridyltransferase family. It in the C-terminal section; belongs to the transferase hexapeptide repeat family. In terms of assembly, homotrimer. The cofactor is Mg(2+).

It is found in the cytoplasm. The enzyme catalyses alpha-D-glucosamine 1-phosphate + acetyl-CoA = N-acetyl-alpha-D-glucosamine 1-phosphate + CoA + H(+). It catalyses the reaction N-acetyl-alpha-D-glucosamine 1-phosphate + UTP + H(+) = UDP-N-acetyl-alpha-D-glucosamine + diphosphate. The protein operates within nucleotide-sugar biosynthesis; UDP-N-acetyl-alpha-D-glucosamine biosynthesis; N-acetyl-alpha-D-glucosamine 1-phosphate from alpha-D-glucosamine 6-phosphate (route II): step 2/2. Its pathway is nucleotide-sugar biosynthesis; UDP-N-acetyl-alpha-D-glucosamine biosynthesis; UDP-N-acetyl-alpha-D-glucosamine from N-acetyl-alpha-D-glucosamine 1-phosphate: step 1/1. It participates in bacterial outer membrane biogenesis; LPS lipid A biosynthesis. Catalyzes the last two sequential reactions in the de novo biosynthetic pathway for UDP-N-acetylglucosamine (UDP-GlcNAc). The C-terminal domain catalyzes the transfer of acetyl group from acetyl coenzyme A to glucosamine-1-phosphate (GlcN-1-P) to produce N-acetylglucosamine-1-phosphate (GlcNAc-1-P), which is converted into UDP-GlcNAc by the transfer of uridine 5-monophosphate (from uridine 5-triphosphate), a reaction catalyzed by the N-terminal domain. The polypeptide is Bifunctional protein GlmU (Paraburkholderia phytofirmans (strain DSM 17436 / LMG 22146 / PsJN) (Burkholderia phytofirmans)).